Here is a 488-residue protein sequence, read N- to C-terminus: Histone deacetylase 2 (488 aa).

The segment at 9–322 (KKKVCYYYDG…WTYETAVALD (314 aa)) is histone deacetylase. The 1D-myo-inositol 1,4,5,6-tetrakisphosphate site is built by Gly28 and Lys32. His142 is a catalytic residue. The Zn(2+) site is built by Asp177, His179, and Asp265. Arg271 is a 1D-myo-inositol 1,4,5,6-tetrakisphosphate binding site. Residues 389–488 (AVHEDSGDED…GAKSEQLSNP (100 aa)) form a disordered region. The segment covering 402-417 (PDKRISIRASDKRIAC) has biased composition (basic and acidic residues). Residues 418–428 (DEEFSDSEDEG) are compositionally biased toward acidic residues. Residues 429 to 481 (EGGRRNVADHKKGAKKARIEEDKKETEDKKADVKEEDKSKDNSGEKTDTKGAK) show a composition bias toward basic and acidic residues.

It belongs to the histone deacetylase family. HD type 1 subfamily. The cofactor is Zn(2+).

The protein localises to the nucleus. It is found in the cytoplasm. The enzyme catalyses N(6)-acetyl-L-lysyl-[histone] + H2O = L-lysyl-[histone] + acetate. The catalysed reaction is N(6)-acetyl-L-lysyl-[protein] + H2O = L-lysyl-[protein] + acetate. It catalyses the reaction N(6)-(2E)-butenoyl-L-lysyl-[protein] + H2O = (2E)-2-butenoate + L-lysyl-[protein]. It carries out the reaction N(6)-(2-hydroxyisobutanoyl)-L-lysyl-[protein] + H2O = 2-hydroxy-2-methylpropanoate + L-lysyl-[protein]. The enzyme catalyses N(6)-[(S)-lactoyl]-L-lysyl-[protein] + H2O = (S)-lactate + L-lysyl-[protein]. Inositol tetraphosphate (1D-myo-inositol 1,4,5,6-tetrakisphosphate) may act as an intermolecular glue between HDAC2 and N-Cor repressor complex components. Its function is as follows. Histone deacetylase that catalyzes the deacetylation of lysine residues on the N-terminal part of the core histones (H2A, H2B, H3 and H4). Histone deacetylation gives a tag for epigenetic repression and plays an important role in transcriptional regulation, cell cycle progression and developmental events. Histone deacetylases act via the formation of large multiprotein complexes. Also deacetylates non-histone proteins. In addition to protein deacetylase activity, also acts as a protein-lysine deacylase by recognizing other acyl groups: catalyzes removal of (2E)-butenoyl (crotonyl), lactoyl (lactyl) and 2-hydroxyisobutanoyl (2-hydroxyisobutyryl) acyl groups from lysine residues, leading to protein decrotonylation, delactylation and de-2-hydroxyisobutyrylation, respectively. This is Histone deacetylase 2 (HDAC2) from Gallus gallus (Chicken).